Here is a 203-residue protein sequence, read N- to C-terminus: MIGRLRGYILEKQPPLVLLEANGVGYEVHMPMTCFYELPELGQEAIVFTQFVVREDAQLLYGFNDKQERALFRELIKVNGVGPKLALAILSGMSAQQFVSAVEREEITSLVKLPGVGKKTAERLVVEMKDRFKGLNGDLFNNSSEITLPTAAQAAELDAEAEAASALVALGYKPQEASRMVSKIAKPGADCETLIRDALRAAL.

Residues 1-64 (MIGRLRGYIL…EDAQLLYGFN (64 aa)) form a domain I region. Residues 65 to 142 (DKQERALFRE…KGLNGDLFNN (78 aa)) form a domain II region. The tract at residues 143–154 (SSEITLPTAAQA) is flexible linker. Residues 155-203 (AELDAEAEAASALVALGYKPQEASRMVSKIAKPGADCETLIRDALRAAL) form a domain III region.

Belongs to the RuvA family. In terms of assembly, homotetramer. Forms an RuvA(8)-RuvB(12)-Holliday junction (HJ) complex. HJ DNA is sandwiched between 2 RuvA tetramers; dsDNA enters through RuvA and exits via RuvB. An RuvB hexamer assembles on each DNA strand where it exits the tetramer. Each RuvB hexamer is contacted by two RuvA subunits (via domain III) on 2 adjacent RuvB subunits; this complex drives branch migration. In the full resolvosome a probable DNA-RuvA(4)-RuvB(12)-RuvC(2) complex forms which resolves the HJ.

The protein resides in the cytoplasm. The RuvA-RuvB-RuvC complex processes Holliday junction (HJ) DNA during genetic recombination and DNA repair, while the RuvA-RuvB complex plays an important role in the rescue of blocked DNA replication forks via replication fork reversal (RFR). RuvA specifically binds to HJ cruciform DNA, conferring on it an open structure. The RuvB hexamer acts as an ATP-dependent pump, pulling dsDNA into and through the RuvAB complex. HJ branch migration allows RuvC to scan DNA until it finds its consensus sequence, where it cleaves and resolves the cruciform DNA. The chain is Holliday junction branch migration complex subunit RuvA from Serratia proteamaculans (strain 568).